The primary structure comprises 1088 residues: Leucine-rich repeat receptor-like protein kinase PEPR2 (1088 aa).

A signal peptide spans 1–26; that stretch reads MRNLGLLEITLLCSLFVYFRIDSVSS. The Extracellular portion of the chain corresponds to 27 to 739; sequence LNSDGLALLS…QVKLSTWKIA (713 aa). Asn-55, Asn-82, and Asn-122 each carry an N-linked (GlcNAc...) asparagine glycan. LRR repeat units follow at residues 75–99, 100–122, 123–146, 147–170, 172–194, 195–219, 221–243, 244–267, 269–291, 292–315, 316–339, 341–363, 365–387, 388–411, 412–435, 436–459, 460–485, 487–506, 507–529, 530–554, 556–577, 578–602, 603–627, 629–651, 652–676, and 678–698; these read GNVV…IGEL, KSLV…TLGN, CTSL…IFGS, LQNL…SVGG, IELV…LLGN, CSKL…LYLL, NLGE…SSNC, KKLV…IGNC, SLHS…MGML, RKVS…LGNC, SSLE…LSKL, KLQS…IWKI, SLTQ…VTQL, KHLK…LGLN, RSLE…LCHG, QKLR…IRQC, KTLE…SLSL, YVNL…LGSC, KNLL…ELGN, LQSL…LSGC, RLLY…SFRS, WKSL…LAEL, DRLS…GLLK, LRYG…LGAL, INLE…SLKS, and NQVD…LLSN. N-linked (GlcNAc...) asparagine glycosylation is found at Asn-149, Asn-159, Asn-183, Asn-194, Asn-209, Asn-229, Asn-266, Asn-279, and Asn-314. 2 N-linked (GlcNAc...) asparagine glycosylation sites follow: Asn-373 and Asn-411. Asn-537 and Asn-568 each carry an N-linked (GlcNAc...) asparagine glycan. 2 N-linked (GlcNAc...) asparagine glycosylation sites follow: Asn-658 and Asn-698. A helical membrane pass occupies residues 740 to 760; sequence LIAAGSSLSVLALLFALFLVL. Over 761–1088 the chain is Cytoplasmic; that stretch reads CRCKRGTKTE…FVRSTSGSVH (328 aa). A Phosphothreonine modification is found at Thr-791. The 287-residue stretch at 794–1080 folds into the Protein kinase domain; that stretch reads LDDKYIIGRG…KDLTDLESFV (287 aa). Residues 800–808 and Lys-822 contribute to the ATP site; that span reads IGRGAHGVV. Residues Tyr-868 and Tyr-908 each carry the phosphotyrosine modification. Asp-921 serves as the catalytic Proton acceptor. Tyr-962 and Tyr-969 each carry phosphotyrosine.

It belongs to the protein kinase superfamily. Ser/Thr protein kinase family. As to quaternary structure, interacts with BAK1. Interacts with CLE14.

The protein localises to the cell membrane. It carries out the reaction L-seryl-[protein] + ATP = O-phospho-L-seryl-[protein] + ADP + H(+). The catalysed reaction is L-threonyl-[protein] + ATP = O-phospho-L-threonyl-[protein] + ADP + H(+). Its function is as follows. Acts as a receptor for PEP defense peptides. Unlike typical immune receptors, senses an endogenous elicitor that potentiates PAMP-inducible plant responses. The protein is Leucine-rich repeat receptor-like protein kinase PEPR2 (PEPR2) of Arabidopsis thaliana (Mouse-ear cress).